We begin with the raw amino-acid sequence, 359 residues long: Peptide chain release factor 1 (359 aa).

Q236 is subject to N5-methylglutamine. Positions 288 to 307 (QDEQDAERKSTIGTGDRSER) are disordered. Residues 293–307 (AERKSTIGTGDRSER) are compositionally biased toward basic and acidic residues.

The protein belongs to the prokaryotic/mitochondrial release factor family. In terms of processing, methylated by PrmC. Methylation increases the termination efficiency of RF1.

Its subcellular location is the cytoplasm. Peptide chain release factor 1 directs the termination of translation in response to the peptide chain termination codons UAG and UAA. In Streptococcus gordonii (strain Challis / ATCC 35105 / BCRC 15272 / CH1 / DL1 / V288), this protein is Peptide chain release factor 1 (prfA).